The chain runs to 415 residues: MPNKKAARNAYFFFALDMIPELRRRGLQVSGVREAIPLCSEDWALLSADQKEAYAEKARLLKNDPDSTSTYNDGVFGQRKRNATKSSDFSSVGFFQLNDQRNCVTQRTVPAMNIDISFNKNKAPDQHVCYFINIFSHGDMPSLCEQRYVPCEIACVRYSLREGILGSFHDFIDPGELPRGFRYHCQSGSASTHQIPISGFELANSDYHNMFRKLCSFVCPTPCPVVPVYTKANDIYRVDWCLQWLANKAGMENHFRVQEVETLIIKFYQDKLQEEPSRPTVSRLLDVVQWDYSSNTRCKWHEDNDMWCCALASCKKIAYCISKALASVYGVTLTPAHLPNPERSRNQNSVNPKVVVLDAKRFQRVCSSDPKYSTDKSERSSFEPRGVKPYQGPSGGGRGILRLLETLAASQNSSG.

A DNA-binding region (HMG box) is located at residues 4-73 (KKAARNAYFF…DPDSTSTYND (70 aa)). The tract at residues 367-399 (SSDPKYSTDKSERSSFEPRGVKPYQGPSGGGRG) is disordered. The segment covering 372-386 (YSTDKSERSSFEPRG) has biased composition (basic and acidic residues).

The protein belongs to the maelstrom family.

It localises to the cytoplasm. The protein localises to the nucleus. Its function is as follows. Plays a central role during spermatogenesis by repressing transposable elements and preventing their mobilization, which is essential for the germline integrity. Acts via the piRNA metabolic process, which mediates the repression of transposable elements during meiosis by forming complexes composed of piRNAs and Piwi proteins and governs the methylation and subsequent repression of transposons. Its association with piP-bodies suggests a participation in the secondary piRNAs metabolic process. Required for the localization of germ-cell factors to the meiotic nuage. The protein is Protein maelstrom homolog (mael) of Xenopus tropicalis (Western clawed frog).